Consider the following 598-residue polypeptide: Arginine--tRNA ligase (598 aa).

The 'HIGH' region signature appears at 140–150; it reads ANPTGPLHVGH.

It belongs to the class-I aminoacyl-tRNA synthetase family. Monomer.

The protein localises to the cytoplasm. It carries out the reaction tRNA(Arg) + L-arginine + ATP = L-arginyl-tRNA(Arg) + AMP + diphosphate. The sequence is that of Arginine--tRNA ligase from Synechococcus sp. (strain JA-3-3Ab) (Cyanobacteria bacterium Yellowstone A-Prime).